A 160-amino-acid chain; its full sequence is Protein P5 (160 aa).

The chain crosses the membrane as a helical span at residues 7 to 23 (FLATAAALGVAMFPTQI).

The protein resides in the virion membrane. This chain is Protein P5 (V), found in Pseudoalteromonas espejiana (Bacteriophage PM2).